Here is a 509-residue protein sequence, read N- to C-terminus: MEDIQTNAELKSTQEQSVPAESAAVLNDYSLTKSHEMENVDSGEGPANEDEDIGDDSMKVKDEYSERDENVLKSEPMGNAEEPEIPYSYSREYNEYENIKLERHVVSFDSSRPTSGKMNCDVCGLSCISFNVLMVHKRSHTGERPFQCNQCGASFTQKGNLLRHIKLHTGEKPFKCHLCNYACQRRDALTGHLRTHSVEKPYKCEFCGRSYKQRSSLEEHKERCRTFLQSTDPGDTASAEARHIKAEMGSERALVLDRLASNVAKRKSSMPQKFIGEKRHCFDVNYNSSYMYEKESELIQTRMMDQAINNAISYLGAEALRPLVQTPPAPTSEMVPVISSMYPIALTRAEMSNGAPQELEKKSIHLPEKSVPSERGLSPNNSGHDSTDTDSNHEERQNHIYQQNHMVLSRARNGMPLLKEVPRSYELLKPPPICPRDSVKVINKEGEVMDVYRCDHCRVLFLDYVMFTIHMGCHGFRDPFECNMCGYRSHDRYEFSSHIARGEHRALLK.

Residues 1–19 (MEDIQTNAELKSTQEQSVP) show a composition bias toward polar residues. The tract at residues 1 to 86 (MEDIQTNAEL…MGNAEEPEIP (86 aa)) is disordered. Phosphoserine occurs at positions 22 and 42. Over residues 56 to 72 (DSMKVKDEYSERDENVL) the composition is skewed to basic and acidic residues. Glycyl lysine isopeptide (Lys-Gly) (interchain with G-Cter in SUMO2) cross-links involve residues Lys61, Lys73, and Lys100. 3 C2H2-type zinc fingers span residues 118–140 (MNCD…KRSH), 146–168 (FQCN…IKLH), and 174–196 (FKCH…LRTH). Residues 202–224 (YKCEFCGRSYKQRSSLEEHKERC) form a C2H2-type 4; atypical zinc finger. Lys245 participates in a covalent cross-link: Glycyl lysine isopeptide (Lys-Gly) (interchain with G-Cter in SUMO2). Thr326 carries the phosphothreonine modification. The interval 364–394 (IHLPEKSVPSERGLSPNNSGHDSTDTDSNHE) is disordered. Ser378 is subject to Phosphoserine. Residues 385-394 (DSTDTDSNHE) show a composition bias toward basic and acidic residues. A C2H2-type 5 zinc finger spans residues 452–474 (YRCDHCRVLFLDYVMFTIHMGCH). The segment at 452-504 (YRCDHCRVLFLDYVMFTIHMGCHGFRDPFECNMCGYRSHDRYEFSSHIARGEH) is mediates homodimerization and heterodimerization. Residues 480 to 504 (FECNMCGYRSHDRYEFSSHIARGEH) form a C2H2-type 6; atypical zinc finger.

This sequence belongs to the Ikaros C2H2-type zinc-finger protein family. As to quaternary structure, homodimer. Heterodimer with other IKAROS family members. Interacts with IKZF4 and IKZF5. Interacts with IKZF1. Interacts with HRAS. Interacts with FOXP3; this interaction may be required for silencing target genes and regulating the suppressive activity of FOXP3-positive regulatory T-cells (Treg). Interacts with BCL21L isoform Bcl-X(L); this interaction blocks the anti-apoptotic role of BCL21L. Associates with histone deacetylase complexes containing HDAC1, MTA2 and SIN3A. Phosphorylation on tyrosine residues induced by IL2 is required for dissociation from HRAS and nuclear translocation of IKZF3 in T-cells. Phosphorylation on tyrosine residues induced by IL4 is required for dissociation from Bcl-X(L) in T-cells. In terms of tissue distribution, expressed most strongly in peripheral blood leukocytes, the spleen, and the thymus.

Its subcellular location is the nucleus. The protein localises to the cytoplasm. Functionally, transcription factor that plays an important role in the regulation of lymphocyte differentiation. Plays an essential role in regulation of B-cell differentiation, proliferation and maturation to an effector state. Involved in regulating BCL2 expression and controlling apoptosis in T-cells in an IL2-dependent manner. This is Zinc finger protein Aiolos (IKZF3) from Homo sapiens (Human).